The sequence spans 452 residues: Matrilin-3 (452 aa).

The signal sequence occupies residues 1-24 (MRRALGTLGCCLALLLPLLPAARG). One can recognise a VWFA domain in the interval 54 to 229 (DLVFIIDSSR…GVIEKLTSKF (176 aa)). EGF-like domains lie at 235 to 275 (AANT…RTCS), 276 to 316 (AVDV…KTCS), 317 to 357 (AMDV…KTCS), and 358 to 398 (AVDV…KTCS). 12 cysteine pairs are disulfide-bonded: Cys239–Cys250, Cys246–Cys259, Cys261–Cys274, Cys280–Cys291, Cys287–Cys300, Cys302–Cys315, Cys321–Cys332, Cys328–Cys341, Cys343–Cys356, Cys362–Cys373, Cys369–Cys382, and Cys384–Cys397. N-linked (GlcNAc...) asparagine glycosylation occurs at Asn295. The stretch at 419–451 (ALQDSVTSRLEALSTKLDEVSQKLQAYQDRQQV) forms a coiled coil.

As to quaternary structure, can form homooligomers (monomers, dimers, trimers and tetramers) and heterooligomers with matrilin-1. In terms of tissue distribution, expression is restricted to cartilaginous tissues.

It is found in the secreted. Functionally, major component of the extracellular matrix of cartilage and may play a role in the formation of extracellular filamentous networks. In Gallus gallus (Chicken), this protein is Matrilin-3 (MATN3).